The chain runs to 799 residues: LPS-assembly protein LptD (799 aa).

An N-terminal signal peptide occupies residues 1–34 (MMHELDLRPHLARFAQRPLALLAWALLQGTSVNA).

Belongs to the LptD family. Component of the lipopolysaccharide transport and assembly complex. Interacts with LptE and LptA.

It localises to the cell outer membrane. Together with LptE, is involved in the assembly of lipopolysaccharide (LPS) at the surface of the outer membrane. The protein is LPS-assembly protein LptD of Albidiferax ferrireducens (strain ATCC BAA-621 / DSM 15236 / T118) (Rhodoferax ferrireducens).